Here is a 422-residue protein sequence, read N- to C-terminus: Lipase member M (422 aa).

An N-terminal signal peptide occupies residues 1–33 (MSEILSRVWTVSHRVEIWLLILVAYLLQRNVNS). Residue asparagine 48 is glycosylated (N-linked (GlcNAc...) asparagine). The AB hydrolase-1 domain maps to 92-392 (PVVLLQHGLL…EWAHVDFIWG (301 aa)). Serine 186 serves as the catalytic Nucleophile. The cysteines at positions 260 and 269 are disulfide-linked. Catalysis depends on charge relay system residues aspartate 357 and histidine 386.

Belongs to the AB hydrolase superfamily. Lipase family.

The protein resides in the secreted. Plays a highly specific role in the last step of keratinocyte differentiation. May have an essential function in lipid metabolism of the most differentiated epidermal layers. The polypeptide is Lipase member M (Lipm) (Mus musculus (Mouse)).